Here is a 104-residue protein sequence, read N- to C-terminus: Large ribosomal subunit protein bL21 (104 aa).

Belongs to the bacterial ribosomal protein bL21 family. Part of the 50S ribosomal subunit. Contacts protein L20.

In terms of biological role, this protein binds to 23S rRNA in the presence of protein L20. The polypeptide is Large ribosomal subunit protein bL21 (Pseudomonas entomophila (strain L48)).